We begin with the raw amino-acid sequence, 262 residues long: Indole-3-glycerol phosphate synthase (262 aa).

The protein belongs to the TrpC family.

It catalyses the reaction 1-(2-carboxyphenylamino)-1-deoxy-D-ribulose 5-phosphate + H(+) = (1S,2R)-1-C-(indol-3-yl)glycerol 3-phosphate + CO2 + H2O. The protein operates within amino-acid biosynthesis; L-tryptophan biosynthesis; L-tryptophan from chorismate: step 4/5. The polypeptide is Indole-3-glycerol phosphate synthase (Thiobacillus denitrificans (strain ATCC 25259 / T1)).